Consider the following 319-residue polypeptide: MKLPLVVLVGPTAVGKTALSVAVAQAVGAEIISGDSMQVYRGMDIGTAKIRPEEMGGVPHHLIDIKDPDEEFSVAEFQARVDALIPQICARGRLPMLVGGTGLYVRAVVEKYTFTPMEADHELRARLRQEEERHGPGYLHARLREVDPASAARLHPNDLLRIVRALEVYEQTGVPISATQTAAFSEPRYDDLMIGLTMDRAQLYARIDERVDAMLAAGWLDEVRGLLVRYPPHVRAMQALGYRELVLYLRGLLTWEEAVALIKRNTRRFAKRQFTWFRKERRLTWLDLTGPEARNRATEEIVRLIREKWPCRERKGRIE.

10-17 lines the ATP pocket; sequence GPTAVGKT. A substrate-binding site is contributed by 12-17; that stretch reads TAVGKT. Residues 35 to 38 are interaction with substrate tRNA; the sequence is DSMQ.

The protein belongs to the IPP transferase family. Monomer. Mg(2+) is required as a cofactor.

The catalysed reaction is adenosine(37) in tRNA + dimethylallyl diphosphate = N(6)-dimethylallyladenosine(37) in tRNA + diphosphate. Its function is as follows. Catalyzes the transfer of a dimethylallyl group onto the adenine at position 37 in tRNAs that read codons beginning with uridine, leading to the formation of N6-(dimethylallyl)adenosine (i(6)A). The sequence is that of tRNA dimethylallyltransferase from Symbiobacterium thermophilum (strain DSM 24528 / JCM 14929 / IAM 14863 / T).